The sequence spans 367 residues: Porin Omp2a (367 aa).

An N-terminal signal peptide occupies residues 1–22; the sequence is MNIKSLLLGSAAALVAASGAQA.

The protein belongs to the alphaproteobacteria porin family. As to quaternary structure, monomer.

The protein localises to the cell outer membrane. In terms of biological role, forms passive diffusion pores that allow small molecular weight hydrophilic materials across the outer membrane. This Brucella canis (strain ATCC 23365 / NCTC 10854 / RM-666) protein is Porin Omp2a (omp2a).